Here is a 25-residue protein sequence, read N- to C-terminus: Caerin 1.1 (25 aa).

Leu-25 bears the Leucine amide mark.

As to expression, expressed by the skin dorsal glands.

The protein resides in the secreted. Functionally, antibacterial peptide with wide spectrum of activity. Active against the Gram-positive bacteria B.cereus (MIC=50 ug/ml), E.faecalis (MIC=25 ug/ml), L.lactis (MIC=1.5 ug/ml), L.innocua (MIC=25 ug/ml), S.aureus (MIC=3 ug/ml), S.epidermidis (MIC=12 ug/ml) and S.uberis (MIC=12 ug/ml), and against the Gram-negative bacteria E.coli (MIC=100 ug/ml) and P.multocida (MIC=25 ug/ml). This Litoria peronii (Emerald spotted tree frog) protein is Caerin 1.1.